The chain runs to 419 residues: Tol-Pal system protein TolB (419 aa).

An N-terminal signal peptide occupies residues 1 to 19 (MFNRIISLFLLLFTGQVIA).

It belongs to the TolB family. The Tol-Pal system is composed of five core proteins: the inner membrane proteins TolA, TolQ and TolR, the periplasmic protein TolB and the outer membrane protein Pal. They form a network linking the inner and outer membranes and the peptidoglycan layer.

It localises to the periplasm. Part of the Tol-Pal system, which plays a role in outer membrane invagination during cell division and is important for maintaining outer membrane integrity. The protein is Tol-Pal system protein TolB of Legionella pneumophila subsp. pneumophila (strain Philadelphia 1 / ATCC 33152 / DSM 7513).